The primary structure comprises 351 residues: Protein MSS2, mitochondrial (351 aa).

2 TPR repeats span residues 155 to 188 (HLTV…ENST) and 260 to 294 (KECF…MDLE).

As to quaternary structure, interacts with COX18.

The protein localises to the mitochondrion inner membrane. In terms of biological role, required to stabilize mitochondrial cytochrome C oxidase subunit 2 (COX2) and to translocate the C-terminal domain of COX2 through the inner membrane. The polypeptide is Protein MSS2, mitochondrial (MSS2) (Saccharomyces cerevisiae (strain ATCC 204508 / S288c) (Baker's yeast)).